Here is a 187-residue protein sequence, read N- to C-terminus: MNNDEVKPQHLYLTGYRGCGKSTLAKLLAQKLSLPSVDLDDVIETTAGKSIAEIFANETEVGFRDREEAALMEVSRRPQHVIALGGGTILREANRNIIANSGWCVWLDAEPDVLVARLAGDATTADRRPSLTDQSVFDEVQSVMSHREPLYRASADLRIDTSHRNMDEILTEVLKAAPSSIGQADLS.

18–23 (GCGKST) contacts ATP. Ser-22 is a Mg(2+) binding site. The substrate site is built by Asp-40, Arg-64, and Gly-86. Arg-128 is an ATP binding site. Arg-147 serves as a coordination point for substrate. Residue Arg-164 coordinates ATP.

The protein belongs to the shikimate kinase family. Monomer. The cofactor is Mg(2+).

It localises to the cytoplasm. It carries out the reaction shikimate + ATP = 3-phosphoshikimate + ADP + H(+). It participates in metabolic intermediate biosynthesis; chorismate biosynthesis; chorismate from D-erythrose 4-phosphate and phosphoenolpyruvate: step 5/7. Catalyzes the specific phosphorylation of the 3-hydroxyl group of shikimic acid using ATP as a cosubstrate. This Rhodopirellula baltica (strain DSM 10527 / NCIMB 13988 / SH1) protein is Shikimate kinase.